Reading from the N-terminus, the 288-residue chain is ATP synthase subunit a (288 aa).

Transmembrane regions (helical) follow at residues 47-67 (LDSM…FWMV), 104-124 (LIAP…LMDL), 157-177 (DPNI…FYSI), 199-219 (PIVQ…TLIA), 237-257 (LIFI…SVPW), and 258-278 (AIFH…LTIV).

Belongs to the ATPase A chain family. As to quaternary structure, F-type ATPases have 2 components, CF(1) - the catalytic core - and CF(0) - the membrane proton channel. CF(1) has five subunits: alpha(3), beta(3), gamma(1), delta(1), epsilon(1). CF(0) has three main subunits: a(1), b(2) and c(9-12). The alpha and beta chains form an alternating ring which encloses part of the gamma chain. CF(1) is attached to CF(0) by a central stalk formed by the gamma and epsilon chains, while a peripheral stalk is formed by the delta and b chains.

It is found in the cell inner membrane. Its function is as follows. Key component of the proton channel; it plays a direct role in the translocation of protons across the membrane. The polypeptide is ATP synthase subunit a (Psychrobacter arcticus (strain DSM 17307 / VKM B-2377 / 273-4)).